Consider the following 122-residue polypeptide: Large ribosomal subunit protein uL14 (122 aa).

It belongs to the universal ribosomal protein uL14 family. As to quaternary structure, part of the 50S ribosomal subunit. Forms a cluster with proteins L3 and L19. In the 70S ribosome, L14 and L19 interact and together make contacts with the 16S rRNA in bridges B5 and B8.

Functionally, binds to 23S rRNA. Forms part of two intersubunit bridges in the 70S ribosome. The chain is Large ribosomal subunit protein uL14 from Maricaulis maris (strain MCS10) (Caulobacter maris).